A 98-amino-acid chain; its full sequence is Large ribosomal subunit protein uL23 (98 aa).

This sequence belongs to the universal ribosomal protein uL23 family. Part of the 50S ribosomal subunit. Contacts protein L29, and trigger factor when it is bound to the ribosome.

In terms of biological role, one of the early assembly proteins it binds 23S rRNA. One of the proteins that surrounds the polypeptide exit tunnel on the outside of the ribosome. Forms the main docking site for trigger factor binding to the ribosome. The chain is Large ribosomal subunit protein uL23 from Thioalkalivibrio sulfidiphilus (strain HL-EbGR7).